The chain runs to 439 residues: UDP-N-acetylmuramate--L-alanine ligase (439 aa).

ATP is bound at residue 113–119 (GSHGKTS).

Belongs to the MurCDEF family.

The protein localises to the cytoplasm. The enzyme catalyses UDP-N-acetyl-alpha-D-muramate + L-alanine + ATP = UDP-N-acetyl-alpha-D-muramoyl-L-alanine + ADP + phosphate + H(+). It participates in cell wall biogenesis; peptidoglycan biosynthesis. Its function is as follows. Cell wall formation. This is UDP-N-acetylmuramate--L-alanine ligase from Lactobacillus delbrueckii subsp. bulgaricus (strain ATCC 11842 / DSM 20081 / BCRC 10696 / JCM 1002 / NBRC 13953 / NCIMB 11778 / NCTC 12712 / WDCM 00102 / Lb 14).